We begin with the raw amino-acid sequence, 397 residues long: Acetate kinase (397 aa).

A Mg(2+)-binding site is contributed by Asn-8. Position 15 (Lys-15) interacts with ATP. Arg-89 provides a ligand contact to substrate. The Proton donor/acceptor role is filled by Asp-146. Residues 206 to 210, 281 to 283, and 329 to 333 contribute to the ATP site; these read HLGNG, DLR, and GVGEN. Residue Glu-382 participates in Mg(2+) binding.

Belongs to the acetokinase family. As to quaternary structure, homodimer. Mg(2+) serves as cofactor. The cofactor is Mn(2+).

It localises to the cytoplasm. The enzyme catalyses acetate + ATP = acetyl phosphate + ADP. It participates in metabolic intermediate biosynthesis; acetyl-CoA biosynthesis; acetyl-CoA from acetate: step 1/2. Functionally, catalyzes the formation of acetyl phosphate from acetate and ATP. Can also catalyze the reverse reaction. The protein is Acetate kinase of Bacillus thuringiensis subsp. konkukian (strain 97-27).